A 327-amino-acid polypeptide reads, in one-letter code: GMP reductase (327 aa).

C176 serves as the catalytic Thioimidate intermediate. 205 to 228 (IIADGGIRTHGDIAKSIRFGATMV) is a binding site for NADP(+).

This sequence belongs to the IMPDH/GMPR family. GuaC type 2 subfamily.

The catalysed reaction is IMP + NH4(+) + NADP(+) = GMP + NADPH + 2 H(+). Its function is as follows. Catalyzes the irreversible NADPH-dependent deamination of GMP to IMP. It functions in the conversion of nucleobase, nucleoside and nucleotide derivatives of G to A nucleotides, and in maintaining the intracellular balance of A and G nucleotides. This chain is GMP reductase, found in Streptococcus equi subsp. equi (strain 4047).